Consider the following 121-residue polypeptide: Natriuretic peptides B (121 aa).

The signal sequence occupies residues 1-26 (MDLQKVLPQMILLLLFLNLSPLGGHS). A disulfide bond links Cys-99 and Cys-115.

The protein belongs to the natriuretic peptide family. Post-translationally, the precursor molecule is proteolytically cleaved by the endoprotease Furin to produce brain natriuretic peptide 45. May undergo further proteolytic cleavage by various proteases such as DPP4, MME and possibly FAP, to give rise to a variety of shorter peptides. May be cleaved at Ser-91 by the prolyl endopeptidase FAP (seprase) activity (in vitro). May be degraded by IDE. During IDE degradation, the resulting products initially increase the activation of NPR1 and can also stimulate NPR2 to produce cGMP before the fragments are completely degraded and inactivated by IDE (in vitro). Expressed in the atria and ventricles, but at much lower levels than NPPA. Expression levels in the ventricles are slightly higher than in the atria. Very low levels of expression detected in the brain, hypothalamus, lung and aorta. In terms of tissue distribution, atria (at protein level). Cardiocytes (at protein level).

It is found in the secreted. In terms of biological role, cardiac hormone that plays a key role in mediating cardio-renal homeostasis. May also function as a paracrine antifibrotic factor in the heart. Acts by specifically binding and stimulating NPR1 to produce cGMP, which in turn activates effector proteins that drive various biological responses. Likely involved in regulating the extracellular fluid volume and maintaining the fluid-electrolyte balance through natriuresis, diuresis, kaluresis and chloruresis. The protein is Natriuretic peptides B (Nppb) of Rattus norvegicus (Rat).